Consider the following 107-residue polypeptide: MDQFATISMEQARERWRQGEAVLVDIRDPQSFAAGHLRGAFHLTNDTLPAFLAQHDLARPVMVLCYHGNSSKGAAQYLLTQGVEVAYSVDGGFDAWLKAFPLETESL.

A Rhodanese domain is found at Arg17–Glu105. The active-site Cysteine persulfide intermediate is Cys65.

The protein belongs to the GlpE family.

The protein resides in the cytoplasm. The enzyme catalyses thiosulfate + hydrogen cyanide = thiocyanate + sulfite + 2 H(+). The catalysed reaction is thiosulfate + [thioredoxin]-dithiol = [thioredoxin]-disulfide + hydrogen sulfide + sulfite + 2 H(+). Its function is as follows. Transferase that catalyzes the transfer of sulfur from thiosulfate to thiophilic acceptors such as cyanide or dithiols. May function in a CysM-independent thiosulfate assimilation pathway by catalyzing the conversion of thiosulfate to sulfite, which can then be used for L-cysteine biosynthesis. This Sodalis glossinidius (strain morsitans) protein is Thiosulfate sulfurtransferase GlpE.